Here is a 128-residue protein sequence, read N- to C-terminus: Gas vesicle protein O (128 aa).

The interval 1 to 49 (MANTPEDTQNTQNDSQNDSQNDSQKDTSARATSARAHQQPQEQPPSPMR) is disordered. The segment covering 7–22 (DTQNTQNDSQNDSQND) has biased composition (low complexity). The span at 29–41 (ARATSARAHQQPQ) shows a compositional bias: polar residues.

It belongs to the gas vesicle GvpO family.

The protein resides in the gas vesicle. Its function is as follows. A minor component of the gas vesicle. May play a role in transcription and/or RNA stability and in GV assembly. Gas vesicles are hollow, gas filled proteinaceous nanostructures found in some microorganisms. It is not clear what function gas vesicles perform in soil bacteria. The chain is Gas vesicle protein O from Streptomyces sp. (strain CB03234).